A 160-amino-acid polypeptide reads, in one-letter code: Small ribosomal subunit protein bS6 (160 aa).

The protein belongs to the bacterial ribosomal protein bS6 family.

Functionally, binds together with bS18 to 16S ribosomal RNA. The protein is Small ribosomal subunit protein bS6 of Ureaplasma parvum serovar 3 (strain ATCC 27815 / 27 / NCTC 11736).